Here is a 607-residue protein sequence, read N- to C-terminus: Phosphoenolpyruvate carboxykinase [GTP] (607 aa).

Substrate is bound by residues arginine 81 and 221-223 (YGG). 2 residues coordinate Mn(2+): lysine 230 and histidine 250. Serine 272 contacts substrate. 273–278 (ACGKTN) contacts GTP. Cysteine 274 is a catalytic residue. Aspartate 297 provides a ligand contact to Mn(2+). 388–390 (NSR) contacts substrate. Residues arginine 390, arginine 421, and 516-519 (FGDN) contribute to the GTP site.

The protein belongs to the phosphoenolpyruvate carboxykinase [GTP] family. Monomer. The cofactor is Mn(2+).

It localises to the cytoplasm. It carries out the reaction oxaloacetate + GTP = phosphoenolpyruvate + GDP + CO2. The protein operates within carbohydrate biosynthesis; gluconeogenesis. Its function is as follows. Catalyzes the conversion of oxaloacetate (OAA) to phosphoenolpyruvate (PEP), the rate-limiting step in the metabolic pathway that produces glucose from lactate and other precursors derived from the citric acid cycle. The protein is Phosphoenolpyruvate carboxykinase [GTP] of Renibacterium salmoninarum (strain ATCC 33209 / DSM 20767 / JCM 11484 / NBRC 15589 / NCIMB 2235).